The primary structure comprises 129 residues: Phosphoribosyl-AMP cyclohydrolase (129 aa).

A Mg(2+)-binding site is contributed by Asp79. Cys80 lines the Zn(2+) pocket. Mg(2+) contacts are provided by Asp81 and Asp83. 2 residues coordinate Zn(2+): Cys96 and Cys103.

The protein belongs to the PRA-CH family. As to quaternary structure, homodimer. Requires Mg(2+) as cofactor. It depends on Zn(2+) as a cofactor.

The protein resides in the cytoplasm. The enzyme catalyses 1-(5-phospho-beta-D-ribosyl)-5'-AMP + H2O = 1-(5-phospho-beta-D-ribosyl)-5-[(5-phospho-beta-D-ribosylamino)methylideneamino]imidazole-4-carboxamide. Its pathway is amino-acid biosynthesis; L-histidine biosynthesis; L-histidine from 5-phospho-alpha-D-ribose 1-diphosphate: step 3/9. Functionally, catalyzes the hydrolysis of the adenine ring of phosphoribosyl-AMP. This is Phosphoribosyl-AMP cyclohydrolase from Magnetococcus marinus (strain ATCC BAA-1437 / JCM 17883 / MC-1).